The chain runs to 330 residues: Free fatty acid receptor 2 (330 aa).

Over 1 to 8 (MTPDWHSS) the chain is Extracellular. A helical transmembrane segment spans residues 9 to 29 (LILTAYILIFLTGLPANLLAL). Residues 30-43 (RAFVSRVRQPQPAP) lie on the Cytoplasmic side of the membrane. A helical membrane pass occupies residues 44–64 (VHILLLNLTLADLLLLLLLPF). Residues 65–79 (RIVEAASNFRWYLPK) lie on the Extracellular side of the membrane. A helical transmembrane segment spans residues 80–100 (IVCALTGFGFYSSIYCSTWLL). The Cytoplasmic segment spans residues 101–126 (AGISIERYLGVAFPVQYKLSRRPLYG). Residues 127–147 (VIAALVAWIMSFGHCTIVIIV) form a helical membrane-spanning segment. Residues 148 to 184 (QYLNSTEQVGTENQITCYENFTQAQLDVVLPVRLELC) are Extracellular-facing. Asn-151 and Asn-167 each carry an N-linked (GlcNAc...) asparagine glycan. Residues 185–205 (LVLFFVPMTVTIFCYWRFVWI) form a helical membrane-spanning segment. At 206 to 219 (MLTQPHVGAQRRRR) the chain is on the cytoplasmic side. Residues 220 to 240 (AVGLAVVTLLNFLVCFGPYNM) form a helical membrane-spanning segment. Residues 241 to 255 (SHLVGFHLRQSPSWR) lie on the Extracellular side of the membrane. Residues 256–276 (VEAVVFSSLNASLDPLLFYFS) traverse the membrane as a helical segment. Residues 277-330 (SSVVRRAFGKGLLLLRNPGSSMLGRGAEETVEGTKTDRGGSQTEGAQSSDFVTE) lie on the Cytoplasmic side of the membrane. The interval 300–330 (GRGAEETVEGTKTDRGGSQTEGAQSSDFVTE) is disordered. The segment covering 302 to 314 (GAEETVEGTKTDR) has biased composition (basic and acidic residues). Polar residues predominate over residues 315-330 (GGSQTEGAQSSDFVTE).

This sequence belongs to the G-protein coupled receptor 1 family. In terms of assembly, interacts with FCN1 (via Fibrinogen C-terminal domain). As to expression, detected in whole wall and separated mucosa in the distal ileum and colon. Expressed by enteroendocrine cells expressing peptide YY (PYY) (at protein level).

It is found in the cell membrane. Functionally, g protein-coupled receptor that is activated by a major product of dietary fiber digestion, the short chain fatty acids (SCFAs), and that plays a role in the regulation of whole-body energy homeostasis and in intestinal immunity. In omnivorous mammals, the short chain fatty acids acetate, propionate and butyrate are produced primarily by the gut microbiome that metabolizes dietary fibers. SCFAs serve as a source of energy but also act as signaling molecules. That G protein-coupled receptor is probably coupled to the pertussis toxin-sensitive, G(i/o)-alpha family of G proteins but also to the Gq family. Its activation results in the formation of inositol 1,4,5-trisphosphate, the mobilization of intracellular calcium, the phosphorylation of the MAPK3/ERK1 and MAPK1/ERK2 kinases and the inhibition of intracellular cAMP accumulation. May play a role in glucose homeostasis by regulating the secretion of GLP-1, in response to short-chain fatty acids accumulating in the intestine. May also regulate the production of LEP/Leptin, a hormone acting on the central nervous system to inhibit food intake. Finally, may also regulate whole-body energy homeostasis through adipogenesis regulating both differentiation and lipid storage of adipocytes. In parallel to its role in energy homeostasis, may also mediate the activation of the inflammatory and immune responses by SCFA in the intestine, regulating the rapid production of chemokines and cytokines. May also play a role in the resolution of the inflammatory response and control chemotaxis in neutrophils. In addition to SCFAs, may also be activated by the extracellular lectin FCN1 in a process leading to activation of monocytes and inducing the secretion of interleukin-8/IL-8 in response to the presence of microbes. This is Free fatty acid receptor 2 (Ffar2) from Rattus norvegicus (Rat).